Reading from the N-terminus, the 41-residue chain is Augerpeptide hhe6.1 (41 aa).

3 cysteine pairs are disulfide-bonded: C11/C32, C18/C35, and C31/C40.

In terms of tissue distribution, expressed by the venom duct.

The protein resides in the secreted. In Hastula hectica (Sea snail), this protein is Augerpeptide hhe6.1.